A 532-amino-acid chain; its full sequence is 3-hydroxy-3-methylglutaryl-coenzyme A reductase 1 (532 aa).

The chain crosses the membrane as a helical span at residues 63 to 83 (FATVVYLVSLFAHPDAPATTT). The tract at residues 77–117 (DAPATTTGDDDDGQGGSRRARPAAAEPAPMHGHGGGMMEAD) is linker. The disordered stretch occupies residues 78-111 (APATTTGDDDDGQGGSRRARPAAAEPAPMHGHGG). The span at 98–107 (PAAAEPAPMH) shows a compositional bias: low complexity. The interval 118 to 532 (DEEIVAAVAS…SSKDVAKAAS (415 aa)) is catalytic. Glu211 functions as the Charge relay system in the catalytic mechanism. N-linked (GlcNAc...) asparagine glycosylation is present at Asn275. Residues Lys343 and Asp419 each act as charge relay system in the active site. Catalysis depends on His517, which acts as the Proton donor. N-linked (GlcNAc...) asparagine glycosylation is present at Asn521.

The protein belongs to the HMG-CoA reductase family.

Its subcellular location is the endoplasmic reticulum membrane. The enzyme catalyses (R)-mevalonate + 2 NADP(+) + CoA = (3S)-3-hydroxy-3-methylglutaryl-CoA + 2 NADPH + 2 H(+). It functions in the pathway metabolic intermediate biosynthesis; (R)-mevalonate biosynthesis; (R)-mevalonate from acetyl-CoA: step 3/3. In terms of biological role, catalyzes the synthesis of mevalonate. The specific precursor of all isoprenoid compounds present in plants. This is 3-hydroxy-3-methylglutaryl-coenzyme A reductase 1 (HMG1) from Oryza sativa subsp. japonica (Rice).